Here is a 612-residue protein sequence, read N- to C-terminus: Coagulation factor XII (612 aa).

The N-terminal stretch at 1-19 is a signal peptide; sequence MRALLLLGALLVSLESTVS. The region spanning 42–90 is the Fibronectin type-II domain; the sequence is VTGEPCHFPFQYHRQLHHKCIHRGRPGPRPWCATTPNFEKDQRWAYCLE. Cystine bridges form between cysteine 47-cysteine 73, cysteine 61-cysteine 88, cysteine 98-cysteine 110, cysteine 104-cysteine 119, cysteine 121-cysteine 130, cysteine 135-cysteine 163, cysteine 161-cysteine 170, cysteine 178-cysteine 189, cysteine 183-cysteine 198, cysteine 200-cysteine 209, cysteine 217-cysteine 306, cysteine 240-cysteine 288, cysteine 268-cysteine 301, cysteine 355-cysteine 482, cysteine 393-cysteine 409, cysteine 401-cysteine 471, cysteine 432-cysteine 435, cysteine 498-cysteine 566, cysteine 529-cysteine 545, and cysteine 556-cysteine 587. Residues 94–131 enclose the EGF-like 1 domain; that stretch reads VKDHCSKHNPCQKGGTCVNMPDGPRCICADHFTGKHCQ. Residue threonine 109 is glycosylated (O-linked (Fuc) threonine). One can recognise a Fibronectin type-I domain in the interval 133 to 173; the sequence is EKCFEPQFFRFFHENEIWHRLEPAGVVKCQCKGPNAQCKPL. The 37-residue stretch at 174–210 folds into the EGF-like 2 domain; that stretch reads ASQVCRTNPCLNGGSCLQAEGHRLCRCAPSFAGRLCD. Residues 217–306 enclose the Kringle domain; sequence CYDDRDRGLS…SWNYCRLAPC (90 aa). 2 N-linked (GlcNAc...) asparagine glycosylation sites follow: asparagine 251 and asparagine 282. The region spanning 369-611 is the Peptidase S1 domain; that stretch reads VVGGLVALPG…YLAWIREHTA (243 aa). The active-site Charge relay system is histidine 408. Asparagine 429 carries an N-linked (GlcNAc...) asparagine glycan. Aspartate 457 acts as the Charge relay system in catalysis. Residue serine 560 is the Charge relay system of the active site.

Belongs to the peptidase S1 family. Interacts with HRG; the interaction, which is enhanced in the presence of zinc ions and inhibited by heparin-binding, inhibits factor XII autoactivation and contact-initiated coagulation. In terms of processing, O- and N-glycosylated.

Its subcellular location is the secreted. The enzyme catalyses Selective cleavage of Arg-|-Ile bonds in factor VII to form factor VIIa and factor XI to form factor XIa.. With respect to regulation, activity is promoted in the presence of negatively charged surfaces. Functionally, factor XII is a serum glycoprotein that participates in the initiation of blood coagulation, fibrinolysis, and the generation of bradykinin and angiotensin. Prekallikrein is cleaved by factor XII to form kallikrein, which then cleaves factor XII first to alpha-factor XIIa and then to beta-factor XIIa. Alpha-factor XIIa activates factor XI to factor XIa. This chain is Coagulation factor XII (F12), found in Bos taurus (Bovine).